Here is a 381-residue protein sequence, read N- to C-terminus: Erythronate-4-phosphate dehydrogenase (381 aa).

Substrate contacts are provided by S45 and T67. Residues D148, 207 to 209, and D233 contribute to the NAD(+) site; that span reads ASR. R209 is a catalytic residue. E238 is an active-site residue. H255 functions as the Proton donor in the catalytic mechanism. G258 contributes to the NAD(+) binding site.

The protein belongs to the D-isomer specific 2-hydroxyacid dehydrogenase family. PdxB subfamily. Homodimer.

It localises to the cytoplasm. The catalysed reaction is 4-phospho-D-erythronate + NAD(+) = (R)-3-hydroxy-2-oxo-4-phosphooxybutanoate + NADH + H(+). It participates in cofactor biosynthesis; pyridoxine 5'-phosphate biosynthesis; pyridoxine 5'-phosphate from D-erythrose 4-phosphate: step 2/5. Catalyzes the oxidation of erythronate-4-phosphate to 3-hydroxy-2-oxo-4-phosphonooxybutanoate. This is Erythronate-4-phosphate dehydrogenase from Idiomarina loihiensis (strain ATCC BAA-735 / DSM 15497 / L2-TR).